Consider the following 321-residue polypeptide: Phosphatidate cytidylyltransferase, mitochondrial (321 aa).

Belongs to the TAM41 family. Mg(2+) is required as a cofactor. The cofactor is Co(2+). Cu(2+) serves as cofactor.

It localises to the mitochondrion inner membrane. The enzyme catalyses a 1,2-diacyl-sn-glycero-3-phosphate + CTP + H(+) = a CDP-1,2-diacyl-sn-glycerol + diphosphate. It participates in phospholipid metabolism; CDP-diacylglycerol biosynthesis; CDP-diacylglycerol from sn-glycerol 3-phosphate: step 3/3. In terms of biological role, catalyzes the formation of CDP-diacylglycerol (CDP-DAG) from phosphatidic acid (PA) in the mitochondrial inner membrane. Required for the biosynthesis of the dimeric phospholipid cardiolipin, which stabilizes supercomplexes of the mitochondrial respiratory chain in the mitochondrial inner membrane. In Caenorhabditis briggsae, this protein is Phosphatidate cytidylyltransferase, mitochondrial.